The primary structure comprises 144 residues: MRLNTLSPAEGAKHSAKRLGRGIGSGLGKTGGRGHKGQKSRTGGGVRRGFEGGQMPLYRRLPKFGFTSMKSAVTAEVRLNELTKVEGNVVTLETLKAANILTKDIQFAKVILAGEVKSAVTVRGLRVTKGAKAAIEAAGGSIEE.

Residues 1–53 (MRLNTLSPAEGAKHSAKRLGRGIGSGLGKTGGRGHKGQKSRTGGGVRRGFEGG) are disordered. The segment covering 21-31 (RGIGSGLGKTG) has biased composition (gly residues).

It belongs to the universal ribosomal protein uL15 family. Part of the 50S ribosomal subunit.

Functionally, binds to the 23S rRNA. In Haemophilus influenzae (strain ATCC 51907 / DSM 11121 / KW20 / Rd), this protein is Large ribosomal subunit protein uL15.